The sequence spans 78 residues: D-alanyl carrier protein (78 aa).

The 78-residue stretch at 1–78 (MEFRDQVLDL…KIVAVLEELR (78 aa)) folds into the Carrier domain. Residue Ser36 is modified to O-(pantetheine 4'-phosphoryl)serine.

Belongs to the DltC family. In terms of processing, 4'-phosphopantetheine is transferred from CoA to a specific serine of apo-DCP.

The protein localises to the cytoplasm. It participates in cell wall biogenesis; lipoteichoic acid biosynthesis. Its function is as follows. Carrier protein involved in the D-alanylation of lipoteichoic acid (LTA). The loading of thioester-linked D-alanine onto DltC is catalyzed by D-alanine--D-alanyl carrier protein ligase DltA. The DltC-carried D-alanyl group is further transferred to cell membrane phosphatidylglycerol (PG) by forming an ester bond, probably catalyzed by DltD. D-alanylation of LTA plays an important role in modulating the properties of the cell wall in Gram-positive bacteria, influencing the net charge of the cell wall. This Staphylococcus saprophyticus subsp. saprophyticus (strain ATCC 15305 / DSM 20229 / NCIMB 8711 / NCTC 7292 / S-41) protein is D-alanyl carrier protein.